Here is a 1199-residue protein sequence, read N- to C-terminus: Chromosome partition protein Smc (1199 aa).

32 to 39 is a binding site for ATP; the sequence is PNGSGKSN. A coiled-coil region spans residues 192–528; that stretch reads GVAEFDEKSE…NARIKTLKDM (337 aa). The SMC hinge domain occupies 546–658; the sequence is PGVVDIAGNL…VDNLENAKKL (113 aa). Residues 691 to 1051 adopt a coiled-coil conformation; the sequence is IKVDIDMKKL…YLQLISEVQK (361 aa).

Belongs to the SMC family. As to quaternary structure, homodimer.

The protein resides in the cytoplasm. Functionally, required for chromosome condensation and partitioning. The polypeptide is Chromosome partition protein Smc (Methanococcus voltae).